A 63-amino-acid chain; its full sequence is Chromatin protein Cren7 (63 aa).

It belongs to the Cren7 family. In terms of assembly, monomer. Methylated at multiple sites, to varying extents.

It is found in the chromosome. Its subcellular location is the cytoplasm. In terms of biological role, a chromatin protein, binds double-stranded DNA without sequence specificity. Constrains negative DNA supercoils. This is Chromatin protein Cren7 from Pyrobaculum calidifontis (strain DSM 21063 / JCM 11548 / VA1).